The following is a 215-amino-acid chain: MSHSDLPLANAVPLDKIRYNDQGLVPAIAQDYLDGTVLMLAWMNEAALAKTLATGQVWYWSRSRQELWHKGATSGHFQKLLGIRYDCDSDALLLTIEQKGDIACHTGERSCFHQLDGHKSPPPADMLTELARVIGDRRDHPTPESYTCKLLAGGDNKILKKIGEESAEVVMACKDDDPEAIAGEVADLFYHTLVALAHHNVDLRAVYRKLGDRRR.

Positions 1-126 (MSHSDLPLAN…GHKSPPPADM (126 aa)) are phosphoribosyl-AMP cyclohydrolase. The tract at residues 127–215 (LTELARVIGD…VYRKLGDRRR (89 aa)) is phosphoribosyl-ATP pyrophosphohydrolase.

In the N-terminal section; belongs to the PRA-CH family. It in the C-terminal section; belongs to the PRA-PH family.

It is found in the cytoplasm. The enzyme catalyses 1-(5-phospho-beta-D-ribosyl)-ATP + H2O = 1-(5-phospho-beta-D-ribosyl)-5'-AMP + diphosphate + H(+). It catalyses the reaction 1-(5-phospho-beta-D-ribosyl)-5'-AMP + H2O = 1-(5-phospho-beta-D-ribosyl)-5-[(5-phospho-beta-D-ribosylamino)methylideneamino]imidazole-4-carboxamide. The protein operates within amino-acid biosynthesis; L-histidine biosynthesis; L-histidine from 5-phospho-alpha-D-ribose 1-diphosphate: step 2/9. It participates in amino-acid biosynthesis; L-histidine biosynthesis; L-histidine from 5-phospho-alpha-D-ribose 1-diphosphate: step 3/9. This is Histidine biosynthesis bifunctional protein HisIE (hisI) from Synechocystis sp. (strain ATCC 27184 / PCC 6803 / Kazusa).